Reading from the N-terminus, the 308-residue chain is Very-long-chain enoyl-CoA reductase (308 aa).

The Cytoplasmic segment spans residues Met1–Ser86. At Lys22 the chain carries N6-acetyllysine. Ser58 carries the phosphoserine modification. Lys60 is subject to N6-acetyllysine. A helical membrane pass occupies residues Trp87–Tyr106. Over Phe107 to His124 the chain is Lumenal. Residues Thr125–Phe147 form a helical membrane-spanning segment. Over Val148–Leu158 the chain is Cytoplasmic. A helical membrane pass occupies residues Arg159–Asn180. Topologically, residues His181–Tyr189 are lumenal. Residues Gly190–Arg216 traverse the membrane as a helical segment. Over Asp217–Cys245 the chain is Cytoplasmic. A helical transmembrane segment spans residues Pro246 to Thr262. Residues Gln263 to Cys264 are Lumenal-facing. The chain crosses the membrane as a helical span at residues Leu265 to Glu292. Residues Phe293–Leu308 lie on the Cytoplasmic side of the membrane.

The protein belongs to the steroid 5-alpha reductase family. In terms of assembly, interacts with ELOVL1 and LASS2. In terms of processing, glycosylated.

It localises to the endoplasmic reticulum membrane. It catalyses the reaction a very-long-chain 2,3-saturated fatty acyl-CoA + NADP(+) = a very-long-chain (2E)-enoyl-CoA + NADPH + H(+). The enzyme catalyses octadecanoyl-CoA + NADP(+) = (2E)-octadecenoyl-CoA + NADPH + H(+). The catalysed reaction is (2E,7Z,10Z,13Z,16Z)-docosapentaenoyl-CoA + NADPH + H(+) = (7Z,10Z,13Z,16Z)-docosatetraenoyl-CoA + NADP(+). It carries out the reaction (2E,7Z,10Z,13Z,16Z,19Z)-docosahexaenoyl-CoA + NADPH + H(+) = (7Z,10Z,13Z,16Z,19Z)-docosapentaenoyl-CoA + NADP(+). It catalyses the reaction (2E,8Z,11Z,14Z)-eicosatetraenoyl-CoA + NADPH + H(+) = (8Z,11Z,14Z)-eicosatrienoyl-CoA + NADP(+). The enzyme catalyses (2E)-hexadecenoyl-CoA + NADPH + H(+) = hexadecanoyl-CoA + NADP(+). The protein operates within lipid metabolism; fatty acid biosynthesis. It participates in lipid metabolism; sphingolipid metabolism. Functionally, involved in both the production of very long-chain fatty acids for sphingolipid synthesis and the degradation of the sphingosine moiety in sphingolipids through the sphingosine 1-phosphate metabolic pathway. Catalyzes the last of the four reactions of the long-chain fatty acids elongation cycle. This endoplasmic reticulum-bound enzymatic process, allows the addition of 2 carbons to the chain of long- and very long-chain fatty acids/VLCFAs per cycle. This enzyme reduces the trans-2,3-enoyl-CoA fatty acid intermediate to an acyl-CoA that can be further elongated by entering a new cycle of elongation. Thereby, it participates in the production of VLCFAs of different chain lengths that are involved in multiple biological processes as precursors of membrane lipids and lipid mediators. Catalyzes the saturation step of the sphingosine 1-phosphate metabolic pathway, the conversion of trans-2-hexadecenoyl-CoA to palmitoyl-CoA. The polypeptide is Very-long-chain enoyl-CoA reductase (TECR) (Bos taurus (Bovine)).